Reading from the N-terminus, the 150-residue chain is Toxin coregulated pilus biosynthesis protein Q (150 aa).

Involved in TCP pilus biogenesis. The chain is Toxin coregulated pilus biosynthesis protein Q (tcpQ) from Vibrio cholerae serotype O1 (strain ATCC 39315 / El Tor Inaba N16961).